Consider the following 143-residue polypeptide: Hemoglobin subunit alpha-1 (143 aa).

Residue serine 2 is modified to N-acetylserine. The Globin domain maps to 2-143; the sequence is SLSSKDKATV…LALALAEKYR (142 aa). Histidine 60 is an O2 binding site. Heme b is bound at residue histidine 89.

Belongs to the globin family. As to quaternary structure, hb 1 is a heterotetramer of two alpha-1 and two beta-1 chains. As to expression, red blood cells.

Involved in oxygen transport from gills to the various peripheral tissues. This chain is Hemoglobin subunit alpha-1 (hba1), found in Arctogadus glacialis (Arctic cod).